The primary structure comprises 393 residues: Ferrochelatase, mitochondrial (393 aa).

A mitochondrion-targeting transit peptide spans 1–31; sequence MLSRTIRTQGSFLRRSQLTITRSFSVTFNMQ. The active site involves D351.

This sequence belongs to the ferrochelatase family. Post-translationally, the leader peptide may be processed in two proteolytic steps, first between Ser-23 and Phe-24, second and by a different protease, to yield the mature protein.

The protein localises to the mitochondrion inner membrane. It carries out the reaction heme b + 2 H(+) = protoporphyrin IX + Fe(2+). It functions in the pathway porphyrin-containing compound metabolism; protoheme biosynthesis; protoheme from protoporphyrin-IX: step 1/1. Functionally, catalyzes the ferrous insertion into protoporphyrin IX. This is Ferrochelatase, mitochondrial (HEM15) from Saccharomyces cerevisiae (strain ATCC 204508 / S288c) (Baker's yeast).